A 339-amino-acid chain; its full sequence is tRNA-splicing endonuclease (339 aa).

Active-site residues include Y274, H285, and K316.

The protein belongs to the tRNA-intron endonuclease family. Archaeal long subfamily. Homodimer. Ca(2+) is required as a cofactor. Mg(2+) serves as cofactor. In terms of processing, the N-terminus is blocked.

It catalyses the reaction pretRNA = a 3'-half-tRNA molecule with a 5'-OH end + a 5'-half-tRNA molecule with a 2',3'-cyclic phosphate end + an intron with a 2',3'-cyclic phosphate and a 5'-hydroxyl terminus.. Functionally, endonuclease that removes tRNA introns. Cleaves pre-tRNA at the 5'- and 3'-splice sites to release the intron. The products are an intron and two tRNA half-molecules bearing 2',3' cyclic phosphate and 5'-OH termini. Recognizes a pseudosymmetric substrate in which 2 bulged loops of 3 bases are separated by a stem of 4 bp. The polypeptide is tRNA-splicing endonuclease (Haloferax volcanii (strain ATCC 29605 / DSM 3757 / JCM 8879 / NBRC 14742 / NCIMB 2012 / VKM B-1768 / DS2) (Halobacterium volcanii)).